A 477-amino-acid chain; its full sequence is UDP-N-acetylmuramoylalanine--D-glutamate ligase (477 aa).

125-131 (GTNGKST) is an ATP binding site.

This sequence belongs to the MurCDEF family.

The protein resides in the cytoplasm. The catalysed reaction is UDP-N-acetyl-alpha-D-muramoyl-L-alanine + D-glutamate + ATP = UDP-N-acetyl-alpha-D-muramoyl-L-alanyl-D-glutamate + ADP + phosphate + H(+). Its pathway is cell wall biogenesis; peptidoglycan biosynthesis. In terms of biological role, cell wall formation. Catalyzes the addition of glutamate to the nucleotide precursor UDP-N-acetylmuramoyl-L-alanine (UMA). This chain is UDP-N-acetylmuramoylalanine--D-glutamate ligase, found in Rhodospirillum rubrum (strain ATCC 11170 / ATH 1.1.1 / DSM 467 / LMG 4362 / NCIMB 8255 / S1).